The following is a 1091-amino-acid chain: Self-sufficient cytochrome P450 monooxygenase CYP505E1 (1091 aa).

Heme is bound at residue Cys433. Positions 528–669 constitute a Flavodoxin-like domain; the sequence is ICFFYGSNSG…DLEAWEETSL (142 aa). Residues 534–538 and 613–645 each bind FMN; these read SNSGT and VFGCGHHDWTQTFYRIPTLIDELMHKAGATRLA. The 229-residue stretch at 707 to 935 folds into the FAD-binding FR-type domain; the sequence is KDLMEARVTT…RPAKEAFHLP (229 aa).

This sequence in the N-terminal section; belongs to the cytochrome P450 family. FAD serves as cofactor. It depends on FMN as a cofactor. The cofactor is heme.

It catalyses the reaction 2 oxidized [cytochrome P450] + NADPH = 2 reduced [cytochrome P450] + NADP(+) + H(+). The catalysed reaction is an organic molecule + reduced [NADPH--hemoprotein reductase] + O2 = an alcohol + oxidized [NADPH--hemoprotein reductase] + H2O + H(+). The enzyme catalyses dodecanoate + reduced [NADPH--hemoprotein reductase] + O2 = 5-hydroxydodecanoate + oxidized [NADPH--hemoprotein reductase] + H2O + H(+). It carries out the reaction tetradecanoate + reduced [NADPH--hemoprotein reductase] + O2 = 7-hydroxytetradecanoate + oxidized [NADPH--hemoprotein reductase] + H2O + H(+). It catalyses the reaction dodecan-1-ol + reduced [NADPH--hemoprotein reductase] + O2 = 1,5-dodecanediol + oxidized [NADPH--hemoprotein reductase] + H2O + H(+). The catalysed reaction is dodecan-1-ol + reduced [NADPH--hemoprotein reductase] + O2 = 1,4-dodecanediol + oxidized [NADPH--hemoprotein reductase] + H2O + H(+). The enzyme catalyses dodecan-1-ol + reduced [NADPH--hemoprotein reductase] + O2 = 1,6-dodecanediol + oxidized [NADPH--hemoprotein reductase] + H2O + H(+). In terms of biological role, self-sufficient cytochrome P450 monooxygenase that catalyzes the regioselective in-chain hydroxylation of alkanes, fatty alcohols, and fatty acids at the omega-7 position. Performs hydroxylation of C10-C16 n-alkanes and C12 and C14 fatty alcohols; and thereby enables the one step biocatalytic synthesis of rare alcohols such as 5-dodecanol and 7-tetradecanol. Converts 1-dodecanol into 1,5-dodecanediol as major product with very little sub-terminally hydroxylated products with the 1,4-dodecanediol and 1,6-dodecanediol more abundant. Converts dodecanoic acid to 5-hydroxydodecanoic acid which can be further converted into delta-dodecalactone by lactonization of the 5-hydroxy acid at low pH. Also gives sub-terminal hydroxylation of dodecanoic acid with 9-hydroxydodecanoic acid being the second most abundant product. The protein is Self-sufficient cytochrome P450 monooxygenase CYP505E1 of Aspergillus niger (strain ATCC MYA-4892 / CBS 513.88 / FGSC A1513).